Consider the following 280-residue polypeptide: Tumor necrosis factor ligand superfamily member 6 (280 aa).

Residues Met1–Leu80 lie on the Cytoplasmic side of the membrane. Positions Ser20–Lys71 are disordered. Positions Arg43–Pro69 are enriched in pro residues. Residues Cys81–Phe101 traverse the membrane as a helical; Signal-anchor for type II membrane protein segment. Topologically, residues Gln102–Leu280 are extracellular. The region spanning Lys144 to Leu280 is the THD domain. An N-linked (GlcNAc...) asparagine glycan is attached at Asn183. A disulfide bond links Cys201 and Cys232. N-linked (GlcNAc...) asparagine glycosylation is found at Asn249 and Asn259.

This sequence belongs to the tumor necrosis factor family. As to quaternary structure, homotrimer. Interacts with ARHGAP9, BAIAP2L1, BTK, CACNB3, CACNB4, CRK, DLG2, DNMBP, DOCK4, EPS8L3, FGR, FYB1, FYN, HCK, ITK, ITSN2, KALRN, LYN, MACC1, MIA, MPP4, MYO15A, NCF1, NCK1, NCK2, NCKIPSD, OSTF1, PIK3R1, PSTPIP1, RIMBP3C, SAMSN1, SH3GL3, SH3PXD2B, SH3PXD2A, SH3RF2, SKAP2, SNX33, SNX9, SORBS3, SPTA1, SRC, SRGAP1, SRGAP2, SRGAP3, TEC, TJP3 and YES1. Post-translationally, the soluble form derives from the membrane form by proteolytic processing. The membrane-bound form undergoes two successive intramembrane proteolytic cleavages. The first one is processed by ADAM10 producing an N-terminal fragment, which lacks the receptor-binding extracellular domain. This ADAM10-processed FasL (FasL APL) remnant form is still membrane anchored and further processed by SPPL2A that liberates the FasL intracellular domain (FasL ICD). FasL shedding by ADAM10 is a prerequisite for subsequent intramembrane cleavage by SPPL2A in T-cells. In terms of processing, phosphorylated by FGR on tyrosine residues; this is required for ubiquitination and subsequent internalization. N-glycosylated. Glycosylation enhances apoptotic activity. Post-translationally, monoubiquitinated.

The protein resides in the cell membrane. Its subcellular location is the cytoplasmic vesicle lumen. The protein localises to the lysosome lumen. It localises to the secreted. It is found in the nucleus. Functionally, cytokine that binds to TNFRSF6/FAS, a receptor that transduces the apoptotic signal into cells. Involved in cytotoxic T-cell-mediated apoptosis, natural killer cell-mediated apoptosis and in T-cell development. Initiates fratricidal/suicidal activation-induced cell death (AICD) in antigen-activated T-cells contributing to the termination of immune responses. TNFRSF6/FAS-mediated apoptosis has also a role in the induction of peripheral tolerance. Binds to TNFRSF6B/DcR3, a decoy receptor that blocks apoptosis. In terms of biological role, induces FAS-mediated activation of NF-kappa-B, initiating non-apoptotic signaling pathways. Can induce apoptosis but does not appear to be essential for this process. Its function is as follows. Cytoplasmic form induces gene transcription inhibition. This chain is Tumor necrosis factor ligand superfamily member 6 (FASLG), found in Felis catus (Cat).